The primary structure comprises 323 residues: tRNA U34 carboxymethyltransferase (323 aa).

Carboxy-S-adenosyl-L-methionine-binding positions include Lys91, Trp105, Lys110, Gly130, 181-182, Met196, Tyr200, and Arg315; that span reads IE.

The protein belongs to the class I-like SAM-binding methyltransferase superfamily. CmoB family. In terms of assembly, homotetramer.

It catalyses the reaction carboxy-S-adenosyl-L-methionine + 5-hydroxyuridine(34) in tRNA = 5-carboxymethoxyuridine(34) in tRNA + S-adenosyl-L-homocysteine + H(+). Its function is as follows. Catalyzes carboxymethyl transfer from carboxy-S-adenosyl-L-methionine (Cx-SAM) to 5-hydroxyuridine (ho5U) to form 5-carboxymethoxyuridine (cmo5U) at position 34 in tRNAs. This is tRNA U34 carboxymethyltransferase from Sodalis glossinidius (strain morsitans).